The sequence spans 141 residues: Hemoglobin subunit alpha (141 aa).

Residues 1 to 141 form the Globin domain; the sequence is VLSPADKTNV…VSTVLTSKYR (141 aa). Position 3 is a phosphoserine (Ser-3). Lys-7 carries the post-translational modification N6-succinyllysine. Thr-8 is modified (phosphothreonine). At Lys-11 the chain carries N6-succinyllysine. Position 16 is an N6-acetyllysine; alternate (Lys-16). Residue Lys-16 is modified to N6-succinyllysine; alternate. Tyr-24 bears the Phosphotyrosine mark. Ser-35 is subject to Phosphoserine. The residue at position 40 (Lys-40) is an N6-succinyllysine. Phosphoserine is present on Ser-49. An O2-binding site is contributed by His-58. His-87 lines the heme b pocket. Ser-102 bears the Phosphoserine mark. Thr-108 carries the phosphothreonine modification. Phosphoserine occurs at positions 124 and 131. Residues Thr-134 and Thr-137 each carry the phosphothreonine modification. At Ser-138 the chain carries Phosphoserine.

It belongs to the globin family. Heterotetramer of two alpha chains and two beta chains. Red blood cells.

Involved in oxygen transport from the lung to the various peripheral tissues. Functionally, hemopressin acts as an antagonist peptide of the cannabinoid receptor CNR1. Hemopressin-binding efficiently blocks cannabinoid receptor CNR1 and subsequent signaling. The protein is Hemoglobin subunit alpha (HBA) of Cebus capucinus (White-faced sapajou).